Reading from the N-terminus, the 300-residue chain is N-acetylmannosamine kinase (300 aa).

ATP is bound by residues 5-12 and 132-139; these read ALDIGGTK and GVGGGIVL. Zn(2+)-binding residues include H156, C166, C168, and C173.

It belongs to the ROK (NagC/XylR) family. NanK subfamily. Homodimer.

The catalysed reaction is an N-acyl-D-mannosamine + ATP = an N-acyl-D-mannosamine 6-phosphate + ADP + H(+). Its pathway is amino-sugar metabolism; N-acetylneuraminate degradation; D-fructose 6-phosphate from N-acetylneuraminate: step 2/5. Its function is as follows. Catalyzes the phosphorylation of N-acetylmannosamine (ManNAc) to ManNAc-6-P. The polypeptide is N-acetylmannosamine kinase (Haemophilus influenzae (strain 86-028NP)).